We begin with the raw amino-acid sequence, 267 residues long: Acryloyl-CoA reductase electron transfer subunit gamma (267 aa).

As to quaternary structure, heterohexadecamer; tetramer of tetramers. Each tetramer is composed of 2 alpha (AcrC), a beta (AcrA) and a gamma (AcrB) subunit.

It localises to the cytoplasm. Functionally, part of the ETF-acryloyl-CoA reductase complex involved in the pathway of L-alanine fermentation. The electron transfer flavoprotein (ETF) serves as a specific electron acceptor for acryloyl-CoA reductase. The protein is Acryloyl-CoA reductase electron transfer subunit gamma (acrB) of Anaerotignum propionicum (Clostridium propionicum).